A 353-amino-acid chain; its full sequence is D-alanine--D-alanine ligase A (353 aa).

In terms of domain architecture, ATP-grasp spans 141–346; it reads KRLVNEAGLS…YPEIINRLVA (206 aa). 169-224 contacts ATP; that stretch reads EQALGLPIFIKPARQGSSVGVHKVVTEADYQAAMSDGFIYDDKLLAEEFIQAREVE. The Mg(2+) site is built by aspartate 300, glutamate 313, and asparagine 315.

This sequence belongs to the D-alanine--D-alanine ligase family. Mg(2+) serves as cofactor. The cofactor is Mn(2+).

The protein localises to the cytoplasm. It carries out the reaction 2 D-alanine + ATP = D-alanyl-D-alanine + ADP + phosphate + H(+). It participates in cell wall biogenesis; peptidoglycan biosynthesis. In terms of biological role, cell wall formation. The protein is D-alanine--D-alanine ligase A of Brucella melitensis biotype 1 (strain ATCC 23456 / CCUG 17765 / NCTC 10094 / 16M).